The primary structure comprises 148 residues: Deoxyuridine 5'-triphosphate nucleotidohydrolase (148 aa).

Residues 68 to 70 (RSG), N81, 85 to 87 (TID), and K95 contribute to the substrate site.

Belongs to the dUTPase family. The cofactor is Mg(2+).

The catalysed reaction is dUTP + H2O = dUMP + diphosphate + H(+). It functions in the pathway pyrimidine metabolism; dUMP biosynthesis; dUMP from dCTP (dUTP route): step 2/2. In terms of biological role, this enzyme is involved in nucleotide metabolism: it produces dUMP, the immediate precursor of thymidine nucleotides and it decreases the intracellular concentration of dUTP so that uracil cannot be incorporated into DNA. The protein is Deoxyuridine 5'-triphosphate nucleotidohydrolase of Rickettsia peacockii (strain Rustic).